A 474-amino-acid polypeptide reads, in one-letter code: Adenosylhomocysteinase (474 aa).

Substrate-binding residues include threonine 61, aspartate 136, and glutamate 196. Residue 197–199 (TTT) coordinates NAD(+). 2 residues coordinate substrate: lysine 226 and aspartate 230. Residues asparagine 231, 260–265 (GYGDVG), glutamate 283, asparagine 318, 339–341 (IGH), and asparagine 384 each bind NAD(+).

It belongs to the adenosylhomocysteinase family. Requires NAD(+) as cofactor.

It localises to the cytoplasm. It catalyses the reaction S-adenosyl-L-homocysteine + H2O = L-homocysteine + adenosine. It functions in the pathway amino-acid biosynthesis; L-homocysteine biosynthesis; L-homocysteine from S-adenosyl-L-homocysteine: step 1/1. Its function is as follows. May play a key role in the regulation of the intracellular concentration of adenosylhomocysteine. This chain is Adenosylhomocysteinase, found in Ralstonia nicotianae (strain ATCC BAA-1114 / GMI1000) (Ralstonia solanacearum).